Consider the following 248-residue polypeptide: Probable transcriptional regulatory protein P9303_05381 (248 aa).

It belongs to the TACO1 family.

It is found in the cytoplasm. The protein is Probable transcriptional regulatory protein P9303_05381 of Prochlorococcus marinus (strain MIT 9303).